The primary structure comprises 408 residues: Zinc finger and SCAN domain-containing protein 1 (408 aa).

The disordered stretch occupies residues 1–34 (MLPRPKAPASPRRPQTPTPSEQDADPGPASPRDT). The SCAN box domain maps to 38–120 (RLRFRQFQYH…SLVEDLTQMC (83 aa)). Disordered regions lie at residues 136-155 (WSFG…EPSQ), 177-203 (LETT…LLGS), and 215-273 (DEPE…GGTQ). Over residues 177–187 (LETTQLQQSLH) the composition is skewed to polar residues. 2 C2H2-type zinc fingers span residues 292-314 (FQCA…QKTH) and 320-342 (FPCP…GKIH). The disordered stretch occupies residues 344-379 (LEPPRKKAPRSKGPRESVPPRDGAQGPVAPRSPKRP). The C2H2-type 3 zinc finger occupies 380–402 (FQCSVCGKAFPWMVHLIDHQKLH).

The protein localises to the nucleus. Its function is as follows. May be involved in transcriptional regulation. The polypeptide is Zinc finger and SCAN domain-containing protein 1 (ZSCAN1) (Homo sapiens (Human)).